The chain runs to 245 residues: S-methyl-5'-thioinosine phosphorylase (245 aa).

Residues Thr-10 and 52–53 (RH) each bind phosphate. Substrate is bound at residue Met-185. Thr-186 serves as a coordination point for phosphate. 209–211 (NPA) contacts substrate.

Belongs to the PNP/MTAP phosphorylase family. MTAP subfamily. In terms of assembly, homotrimer.

The catalysed reaction is S-methyl-5'-thioinosine + phosphate = 5-(methylsulfanyl)-alpha-D-ribose 1-phosphate + hypoxanthine. It functions in the pathway purine metabolism; purine nucleoside salvage. In terms of biological role, catalyzes the reversible phosphorylation of S-methyl-5'-thioinosine (MTI) to hypoxanthine and 5-methylthioribose-1-phosphate. Involved in the breakdown of S-methyl-5'-thioadenosine (MTA), a major by-product of polyamine biosynthesis. Catabolism of (MTA) occurs via deamination to MTI and phosphorolysis to hypoxanthine. Involved in quorum sensing. The polypeptide is S-methyl-5'-thioinosine phosphorylase (Pseudomonas aeruginosa (strain ATCC 15692 / DSM 22644 / CIP 104116 / JCM 14847 / LMG 12228 / 1C / PRS 101 / PAO1)).